A 546-amino-acid chain; its full sequence is Chaperonin GroEL (546 aa).

ATP-binding positions include 30–33, Lys51, 87–91, Gly415, and Asp496; these read TLGP and DGTTT. Residues 526 to 546 form a disordered region; sequence PQKDAPAGGGMPDMGGMGGMM. The span at 532–546 shows a compositional bias: gly residues; it reads AGGGMPDMGGMGGMM.

It belongs to the chaperonin (HSP60) family. In terms of assembly, forms a cylinder of 14 subunits composed of two heptameric rings stacked back-to-back. Interacts with the co-chaperonin GroES.

Its subcellular location is the cytoplasm. It carries out the reaction ATP + H2O + a folded polypeptide = ADP + phosphate + an unfolded polypeptide.. Together with its co-chaperonin GroES, plays an essential role in assisting protein folding. The GroEL-GroES system forms a nano-cage that allows encapsulation of the non-native substrate proteins and provides a physical environment optimized to promote and accelerate protein folding. The polypeptide is Chaperonin GroEL (Ruegeria pomeroyi (strain ATCC 700808 / DSM 15171 / DSS-3) (Silicibacter pomeroyi)).